The primary structure comprises 465 residues: Kinesin-like protein KIN-1 (465 aa).

The 332-residue stretch at 3-334 (NVTVCARFRP…LRFGMRAKHI (332 aa)) folds into the Kinesin motor domain. 87–94 (GQTGAGKT) serves as a coordination point for ATP. The interval 338-358 (PRASEVKSAKAQEEPSSVTKD) is disordered. Residues 341–358 (SEVKSAKAQEEPSSVTKD) show a composition bias toward basic and acidic residues. Residues 402-444 (VYEDIVSKTIQSLQQAVDELQQKVKKLEAENIGIQEQALRNHE) are a coiled coil.

Belongs to the TRAFAC class myosin-kinesin ATPase superfamily. Kinesin family. KIN-1 subfamily. As to quaternary structure, homodimer. Interacts with WIP1 and WIP2. As to expression, specifically expressed in ovules and anthers.

Kinesin-like motor protein that promotes synapsis and is required for proper crossover distribution in meiosis. Plays a role in the nuclear division cycles during megagametogenesis. The polypeptide is Kinesin-like protein KIN-1 (Arabidopsis thaliana (Mouse-ear cress)).